The following is a 187-amino-acid chain: Ribosome-recycling factor (187 aa).

Belongs to the RRF family.

The protein resides in the cytoplasm. In terms of biological role, responsible for the release of ribosomes from messenger RNA at the termination of protein biosynthesis. May increase the efficiency of translation by recycling ribosomes from one round of translation to another. In Nitrosococcus oceani (strain ATCC 19707 / BCRC 17464 / JCM 30415 / NCIMB 11848 / C-107), this protein is Ribosome-recycling factor.